A 432-amino-acid chain; its full sequence is GTPase Obg (432 aa).

Residues 1 to 159 (MKFIDTAKFT…YEVKAELKVL (159 aa)) enclose the Obg domain. Positions 160–332 (ADVGFVGLPN…LLLKIAKELE (173 aa)) constitute an OBG-type G domain. GTP contacts are provided by residues 166–173 (GLPNAGKS), 191–195 (FTTLN), 213–216 (DLPG), 284–287 (NKMD), and 313–315 (SGL). Residues serine 173 and threonine 193 each coordinate Mg(2+). One can recognise an OCT domain in the interval 354 to 432 (RLEEDEEDIQ…VFEYELEWMD (79 aa)).

It belongs to the TRAFAC class OBG-HflX-like GTPase superfamily. OBG GTPase family. Monomer. Mg(2+) serves as cofactor.

It localises to the cytoplasm. In terms of biological role, an essential GTPase which binds GTP, GDP and possibly (p)ppGpp with moderate affinity, with high nucleotide exchange rates and a fairly low GTP hydrolysis rate. Plays a role in control of the cell cycle, stress response, ribosome biogenesis and in those bacteria that undergo differentiation, in morphogenesis control. This is GTPase Obg from Mesoplasma florum (strain ATCC 33453 / NBRC 100688 / NCTC 11704 / L1) (Acholeplasma florum).